The primary structure comprises 414 residues: Phosphopentomutase (414 aa).

Mn(2+) is bound by residues Asp-10, Asp-309, His-314, Asp-350, His-351, and His-362.

This sequence belongs to the phosphopentomutase family. The cofactor is Mn(2+).

The protein resides in the cytoplasm. The enzyme catalyses 2-deoxy-alpha-D-ribose 1-phosphate = 2-deoxy-D-ribose 5-phosphate. It carries out the reaction alpha-D-ribose 1-phosphate = D-ribose 5-phosphate. It participates in carbohydrate degradation; 2-deoxy-D-ribose 1-phosphate degradation; D-glyceraldehyde 3-phosphate and acetaldehyde from 2-deoxy-alpha-D-ribose 1-phosphate: step 1/2. Its function is as follows. Isomerase that catalyzes the conversion of deoxy-ribose 1-phosphate (dRib-1-P) and ribose 1-phosphate (Rib-1-P) to deoxy-ribose 5-phosphate (dRib-5-P) and ribose 5-phosphate (Rib-5-P), respectively. The chain is Phosphopentomutase from Hahella chejuensis (strain KCTC 2396).